Consider the following 553-residue polypeptide: ATP synthase F(1) complex subunit alpha, mitochondrial (553 aa).

Residues 1–43 constitute a mitochondrion transit peptide; it reads MLSVRVAAAVVRALPRRAGLVSRNALGSSFIAARNFHASNTHL. Phosphoserine is present on residues Ser-53 and Ser-65. Ser-76 bears the Phosphoserine; alternate mark. An O-linked (GlcNAc) serine; alternate glycan is attached at Ser-76. Ser-106 is subject to Phosphoserine. N6-acetyllysine is present on residues Lys-123, Lys-126, and Lys-132. Position 134 is a phosphothreonine (Thr-134). Lys-161 is modified (N6-acetyllysine; alternate). N6-succinyllysine; alternate is present on Lys-161. At Ser-166 the chain carries Phosphoserine. An N6-acetyllysine; alternate modification is found at Lys-167. N6-succinyllysine; alternate is present on Lys-167. Ser-184 is subject to Phosphoserine. Arg-204 bears the Omega-N-methylarginine mark. ATP is bound by residues Gln-215, Gly-217, Lys-218, Thr-219, and Ser-220. Thr-219 contributes to the Mg(2+) binding site. 2 positions are modified to N6-acetyllysine; alternate: Lys-230 and Lys-239. N6-succinyllysine; alternate is present on residues Lys-230 and Lys-239. Residue Lys-240 is modified to N6-acetyllysine. Lys-261 and Lys-305 each carry N6-acetyllysine; alternate. N6-succinyllysine; alternate is present on residues Lys-261 and Lys-305. A Mg(2+)-binding site is contributed by Asp-312. Lys-427 is modified (N6-acetyllysine; alternate). Lys-427 is modified (N6-succinyllysine; alternate). Position 434 is an N6-acetyllysine (Lys-434). The ATP site is built by Gln-473 and Gln-475. An N6-acetyllysine; alternate mark is found at Lys-498, Lys-506, Lys-531, and Lys-539. N6-succinyllysine; alternate is present on residues Lys-498, Lys-506, Lys-531, and Lys-539. The residue at position 541 (Lys-541) is an N6-acetyllysine.

Belongs to the ATPase alpha/beta chains family. In terms of assembly, homotrimer. Component of the ATP synthase complex composed at least of ATP5F1A/subunit alpha, ATP5F1B/subunit beta, ATP5MC1/subunit c (homooctomer), MT-ATP6/subunit a, MT-ATP8/subunit 8, ATP5ME/subunit e, ATP5MF/subunit f, ATP5MG/subunit g, ATP5MK/subunit k, ATP5MJ/subunit j, ATP5F1C/subunit gamma, ATP5F1D/subunit delta, ATP5F1E/subunit epsilon, ATP5PF/subunit F6, ATP5PB/subunit b, ATP5PD/subunit d, ATP5PO/subunit OSCP. ATP synthase complex consists of a soluble F(1) head domain (subunits alpha(3) and beta(3)) - the catalytic core - and a membrane F(0) domain - the membrane proton channel (subunits c, a, 8, e, f, g, k and j). These two domains are linked by a central stalk (subunits gamma, delta, and epsilon) rotating inside the F1 region and a stationary peripheral stalk (subunits F6, b, d, and OSCP). Interacts with ATPAF2. Interacts with HRG; the interaction occurs on the surface of T-cells and alters the cell morphology when associated with concanavalin (in vitro). Interacts with PLG (angiostatin peptide); the interaction inhibits most of the angiogenic properties of angiostatin. Interacts with BLOC1S1. Interacts with BCL2L1 isoform BCL-X(L); the interaction mediates the association of BCL2L1 isoform BCL-X(L) with the mitochondrial membrane F(1)F(0) ATP synthase and enhances neurons metabolic efficiency. Interacts with CLN5 and PPT1. Interacts with S100A1; this interaction increases F1-ATPase activity. Interacts with ABCB7; this interaction allows the regulation of cellular iron homeostasis and cellular reactive oxygen species (ROS) levels in cardiomyocytes. Post-translationally, acetylated on lysine residues. BLOC1S1 is required for acetylation.

It localises to the mitochondrion inner membrane. The protein resides in the cell membrane. Subunit alpha, of the mitochondrial membrane ATP synthase complex (F(1)F(0) ATP synthase or Complex V) that produces ATP from ADP in the presence of a proton gradient across the membrane which is generated by electron transport complexes of the respiratory chain. ATP synthase complex consist of a soluble F(1) head domain - the catalytic core - and a membrane F(1) domain - the membrane proton channel. These two domains are linked by a central stalk rotating inside the F(1) region and a stationary peripheral stalk. During catalysis, ATP synthesis in the catalytic domain of F(1) is coupled via a rotary mechanism of the central stalk subunits to proton translocation. In vivo, can only synthesize ATP although its ATP hydrolase activity can be activated artificially in vitro. With the catalytic subunit beta (ATP5F1B), forms the catalytic core in the F(1) domain. Subunit alpha does not bear the catalytic high-affinity ATP-binding sites. The chain is ATP synthase F(1) complex subunit alpha, mitochondrial from Pan troglodytes (Chimpanzee).